The sequence spans 293 residues: Lysosomal amino acid transporter 1 homolog (293 aa).

Over 1 to 37 (MVWRTLGASNFSTCPNGSVQWIWDVFGECAQDGWDEA) the chain is Lumenal. N-linked (GlcNAc...) asparagine glycosylation is found at Asn-10 and Asn-16. In terms of domain architecture, PQ-loop 1 spans 34-100 (WDEASVGLGL…LADQLPLQTY (67 aa)). Residues 38–58 (SVGLGLVSILCFAASTFPQYI) form a helical membrane-spanning segment. Topologically, residues 59–71 (KACKTGNMDQALS) are cytoplasmic. Residues 72–92 (LWFLLGWIGGDSCNLIGSFLA) form a helical membrane-spanning segment. The Lumenal segment spans residues 93 to 96 (DQLP). A helical membrane pass occupies residues 97-117 (LQTYTAVYYVLADLMMLTLYF). Over 118–127 (HYKFKKRPSP) the chain is Cytoplasmic. A helical transmembrane segment spans residues 128-148 (LSAPINSVLLFILGTVCITPL). Residues 149–182 (LSSTDPVAVPREGFRGRTLLSVEPGNKPFTKKEV) are Lumenal-facing. Residues 183–203 (IGFVIGSASSLLYLLSRLPQI) form a helical membrane-spanning segment. The PQ-loop 2 domain occupies 191–243 (SSLLYLLSRLPQIRTNFIRQSTQGISYSLFALVMLGNTLYGLSVLLKNPEVGQ). Residues 204–214 (RTNFIRQSTQG) are Cytoplasmic-facing. A helical transmembrane segment spans residues 215 to 235 (ISYSLFALVMLGNTLYGLSVL). Topologically, residues 236 to 254 (LKNPEVGQSEGSYLLHHLP) are lumenal. The helical transmembrane segment at 255 to 275 (WLVGSLGVLLLDTIISIQFLV) threads the bilayer. Residues 276-293 (YRSHETAAASEREPLLPS) are Cytoplasmic-facing. The Di-leucine motif motif lies at 290–291 (LL).

The protein belongs to the laat-1 family. In terms of tissue distribution, ubiquitously expressed.

Its subcellular location is the lysosome membrane. Amino acid transporter that specifically mediates the pH-dependent export of the cationic amino acids arginine, histidine and lysine from lysosomes. The chain is Lysosomal amino acid transporter 1 homolog from Mus musculus (Mouse).